Reading from the N-terminus, the 327-residue chain is Vacuolar protein sorting-associated protein 26A (327 aa).

Residues 306 to 327 (RTNFHQRFESPESQASAEQPEM) are disordered. S315 carries the post-translational modification Phosphoserine. Over residues 316–327 (PESQASAEQPEM) the composition is skewed to polar residues.

Belongs to the VPS26 family. As to quaternary structure, component of the heterotrimeric retromer cargo-selective complex (CSC), also described as vacuolar protein sorting subcomplex (VPS), formed by VPS26 (VPS26A or VPS26B), VPS29 and VPS35. The CSC has a highly elongated structure with VPS26 and VPS29 binding independently at opposite distal ends of VPS35 as central platform. The CSC is believed to associate with variable sorting nexins to form functionally distinct retromer complex variants. The originally described retromer complex (also called SNX-BAR retromer) is a pentamer containing the CSC and a heterodimeric membrane-deforming subcomplex formed between SNX1 or SNX2 and SNX5 or SNX6 (also called SNX-BAR subcomplex); the respective CSC and SNX-BAR subcomplexes associate with low affinity. The CSC associates with SNX3 to form a SNX3-retromer complex. The CSC associates with SNX27, the WASH complex and the SNX-BAR subcomplex to form the SNX27-retromer complex. Interacts with VPS29, VPS35, SNX27, SNX1, SNX2, SNX5, SNX6, SNX3, RAB7A, ECPAS, EHD1, WASHC5, SORL1.

The protein resides in the cytoplasm. It is found in the endosome membrane. It localises to the early endosome. Its function is as follows. Acts as a component of the retromer cargo-selective complex (CSC). The CSC is believed to be the core functional component of retromer or respective retromer complex variants acting to prevent missorting of selected transmembrane cargo proteins into the lysosomal degradation pathway. The recruitment of the CSC to the endosomal membrane involves RAB7A and SNX3. The SNX-BAR retromer mediates retrograde transport of cargo proteins from endosomes to the trans-Golgi network (TGN) and is involved in endosome-to-plasma membrane transport for cargo protein recycling. The SNX3-retromer mediates the retrograde endosome-to-TGN transport of WLS distinct from the SNX-BAR retromer pathway. The SNX27-retromer is believed to be involved in endosome-to-plasma membrane trafficking and recycling of a broad spectrum of cargo proteins. The CSC complex seems to act as recruitment hub for other proteins, such as the WASH complex and TBC1D5. Required for retrograde transport of lysosomal enzyme receptor IGF2R. Required to regulate transcytosis of the polymeric immunoglobulin receptor (pIgR-pIgA). Required for the endosomal localization of WASHC2 (indicative for the WASH complex). Required for the endosomal localization of TBC1D5. Mediates retromer cargo recognition of SORL1 and is involved in trafficking of SORL1 implicated in sorting and processing of APP. Involved in retromer-independent lysosomal sorting of F2R. Involved in recycling of ADRB2. Acts redundantly with VSP26B in SNX-27 mediated endocytic recycling of SLC2A1/GLUT1. Enhances the affinity of SNX27 for PDZ-binding motifs in cargo proteins. The polypeptide is Vacuolar protein sorting-associated protein 26A (Vps26a) (Rattus norvegicus (Rat)).